The chain runs to 267 residues: Integral membrane protein 2C (267 aa).

T37 is modified (phosphothreonine). Residues 55–75 (VGGVCYLSMGMVVLLMGLVFA) form a helical; Signal-anchor for type II membrane protein membrane-spanning segment. Positions 136 to 230 (FGGGDPADII…LCNGKDTYRL (95 aa)) constitute a BRICHOS domain. An intrachain disulfide couples C163 to C222. N-linked (GlcNAc...) asparagine glycosylation occurs at N169.

The protein belongs to the ITM2 family. In terms of assembly, interacts with BACE1. Interacts with APP. Interacts with STMN2. In terms of processing, type I membrane-bound, as well as soluble, furin has a pre-eminent role in ITM2C proteolytic processing. PCSK7 and PCSK5 may also be involved although to a lesser extent. The soluble form of PCSK7 is incapable of processing ITM2C. Fails to undergo shedding by ADAM10 and intramembrane cleavage by SPPL2B. High levels in the brain, specifically in the cerebral cortex, medulla, amygdala, hippocampus, thalamus, caudate nucleus, cerebellum, olfactory lobe and spinal cord. Very low levels in other organs.

The protein resides in the lysosome membrane. It is found in the cell membrane. Negative regulator of amyloid-beta peptide production. May inhibit the processing of APP by blocking its access to alpha- and beta-secretase. Binding to the beta-secretase-cleaved APP C-terminal fragment is negligible, suggesting that ITM2C is a poor gamma-secretase cleavage inhibitor. May play a role in TNF-induced cell death and neuronal differentiation. The polypeptide is Integral membrane protein 2C (ITM2C) (Homo sapiens (Human)).